A 432-amino-acid polypeptide reads, in one-letter code: Serine--tRNA ligase (432 aa).

Position 236–238 (Thr236–Glu238) interacts with L-serine. Arg267–Glu269 lines the ATP pocket. Glu290 is a binding site for L-serine. An ATP-binding site is contributed by Glu354 to Ser357. Position 390 (Ser390) interacts with L-serine.

Belongs to the class-II aminoacyl-tRNA synthetase family. Type-1 seryl-tRNA synthetase subfamily. As to quaternary structure, homodimer. The tRNA molecule binds across the dimer.

It is found in the cytoplasm. The enzyme catalyses tRNA(Ser) + L-serine + ATP = L-seryl-tRNA(Ser) + AMP + diphosphate + H(+). It carries out the reaction tRNA(Sec) + L-serine + ATP = L-seryl-tRNA(Sec) + AMP + diphosphate + H(+). Its pathway is aminoacyl-tRNA biosynthesis; selenocysteinyl-tRNA(Sec) biosynthesis; L-seryl-tRNA(Sec) from L-serine and tRNA(Sec): step 1/1. Functionally, catalyzes the attachment of serine to tRNA(Ser). Is also able to aminoacylate tRNA(Sec) with serine, to form the misacylated tRNA L-seryl-tRNA(Sec), which will be further converted into selenocysteinyl-tRNA(Sec). This Pseudoalteromonas atlantica (strain T6c / ATCC BAA-1087) protein is Serine--tRNA ligase.